A 906-amino-acid chain; its full sequence is DNA mismatch repair protein MutS (906 aa).

Position 656–663 (656–663) interacts with ATP; it reads GPNMAGKS.

It belongs to the DNA mismatch repair MutS family.

Its function is as follows. This protein is involved in the repair of mismatches in DNA. It is possible that it carries out the mismatch recognition step. This protein has a weak ATPase activity. In Rhodopseudomonas palustris (strain BisA53), this protein is DNA mismatch repair protein MutS.